We begin with the raw amino-acid sequence, 591 residues long: V-type ATP synthase alpha chain (591 aa).

233–240 (GPFGAGKT) is an ATP binding site.

The protein belongs to the ATPase alpha/beta chains family.

The catalysed reaction is ATP + H2O + 4 H(+)(in) = ADP + phosphate + 5 H(+)(out). In terms of biological role, produces ATP from ADP in the presence of a proton gradient across the membrane. The V-type alpha chain is a catalytic subunit. In Streptococcus pyogenes serotype M3 (strain ATCC BAA-595 / MGAS315), this protein is V-type ATP synthase alpha chain.